A 160-amino-acid chain; its full sequence is AP-1 complex subunit sigma-2 (160 aa).

The protein belongs to the adaptor complexes small subunit family. Adaptor protein complex 1 (AP-1) is a heterotetramer composed of two large adaptins (gamma-type subunit AP1G1 and beta-type subunit AP1B1), a medium adaptin (mu-type subunit AP1M1 or AP1M2) and a small adaptin (sigma-type subunit AP1S1 or AP1S2 or AP1S3). Binds to MUC1. As to expression, widely expressed.

The protein localises to the golgi apparatus. It is found in the cytoplasmic vesicle membrane. The protein resides in the membrane. It localises to the clathrin-coated pit. Functionally, subunit of clathrin-associated adaptor protein complex 1 that plays a role in protein sorting in the late-Golgi/trans-Golgi network (TGN) and/or endosomes. The AP complexes mediate both the recruitment of clathrin to membranes and the recognition of sorting signals within the cytosolic tails of transmembrane cargo molecules. This Mus musculus (Mouse) protein is AP-1 complex subunit sigma-2 (Ap1s2).